A 1435-amino-acid polypeptide reads, in one-letter code: DNA polymerase III PolC-type (1435 aa).

The Exonuclease domain maps to 404–562; that stretch reads YVVYDIETTG…YDSSVLTNIF (159 aa).

The protein belongs to the DNA polymerase type-C family. PolC subfamily.

It localises to the cytoplasm. The enzyme catalyses DNA(n) + a 2'-deoxyribonucleoside 5'-triphosphate = DNA(n+1) + diphosphate. Functionally, required for replicative DNA synthesis. This DNA polymerase also exhibits 3' to 5' exonuclease activity. This Mycoplasmopsis pulmonis (strain UAB CTIP) (Mycoplasma pulmonis) protein is DNA polymerase III PolC-type.